The following is a 115-amino-acid chain: Large ribosomal subunit protein bL20 (115 aa).

Belongs to the bacterial ribosomal protein bL20 family.

Functionally, binds directly to 23S ribosomal RNA and is necessary for the in vitro assembly process of the 50S ribosomal subunit. It is not involved in the protein synthesizing functions of that subunit. The protein is Large ribosomal subunit protein bL20 of Mycoplasmoides gallisepticum (strain R(low / passage 15 / clone 2)) (Mycoplasma gallisepticum).